The following is an 83-amino-acid chain: Disintegrin bitistatin (83 aa).

The 82-residue stretch at 2–83 (PPVCGNKILE…GKSSDCPWNH (82 aa)) folds into the Disintegrin domain. Disulfide bonds link Cys-5–Cys-24, Cys-5–Cys-34, Cys-16–Cys-29, Cys-16–Cys-34, Cys-18–Cys-24, Cys-18–Cys-29, Cys-28–Cys-51, Cys-42–Cys-48, Cys-47–Cys-72, and Cys-60–Cys-79. The Cell attachment site motif lies at 64–66 (RGD).

This sequence belongs to the venom metalloproteinase (M12B) family. P-II subfamily. P-IIa sub-subfamily. Monomer. Exists in 3 forms in the venom. The forms A, B, and C are present at 53%, 32% and 15%. The forms A and B differ by their disulfide bond pattern in the N-terminal part. No information is known about form C. In terms of tissue distribution, expressed by the venom gland.

The protein localises to the secreted. Functionally, inhibits fibrinogen interaction with platelets. Acts by binding to alpha-IIb/beta-3 (ITGA2B/ITGB3) on the platelet surface and inhibits aggregation induced by ADP, thrombin, platelet-activating factor and collagen. This chain is Disintegrin bitistatin, found in Bitis arietans (African puff adder).